A 266-amino-acid chain; its full sequence is Translation initiation factor 2 subunit alpha (266 aa).

Residues Gly12–Lys83 form the S1 motif domain.

Belongs to the eIF-2-alpha family. Heterotrimer composed of an alpha, a beta and a gamma chain.

EIF-2 functions in the early steps of protein synthesis by forming a ternary complex with GTP and initiator tRNA. This Saccharolobus islandicus (strain Y.N.15.51 / Yellowstone #2) (Sulfolobus islandicus) protein is Translation initiation factor 2 subunit alpha.